Reading from the N-terminus, the 179-residue chain is Large ribosomal subunit protein uL5 (179 aa).

This sequence belongs to the universal ribosomal protein uL5 family. In terms of assembly, part of the 50S ribosomal subunit; part of the 5S rRNA/L5/L18/L25 subcomplex. Contacts the 5S rRNA and the P site tRNA. Forms a bridge to the 30S subunit in the 70S ribosome.

In terms of biological role, this is one of the proteins that bind and probably mediate the attachment of the 5S RNA into the large ribosomal subunit, where it forms part of the central protuberance. In the 70S ribosome it contacts protein S13 of the 30S subunit (bridge B1b), connecting the 2 subunits; this bridge is implicated in subunit movement. Contacts the P site tRNA; the 5S rRNA and some of its associated proteins might help stabilize positioning of ribosome-bound tRNAs. This chain is Large ribosomal subunit protein uL5, found in Rickettsia bellii (strain OSU 85-389).